We begin with the raw amino-acid sequence, 157 residues long: Endoribonuclease YbeY (157 aa).

Zn(2+) contacts are provided by His-114, His-118, and His-124.

It belongs to the endoribonuclease YbeY family. It depends on Zn(2+) as a cofactor.

Its subcellular location is the cytoplasm. Functionally, single strand-specific metallo-endoribonuclease involved in late-stage 70S ribosome quality control and in maturation of the 3' terminus of the 16S rRNA. The protein is Endoribonuclease YbeY of Salmonella typhimurium (strain LT2 / SGSC1412 / ATCC 700720).